The sequence spans 462 residues: WD repeat-containing protein WRAP73 (462 aa).

WD repeat units lie at residues 46-86, 89-129, 176-210, and 221-260; these read TCLD…WHCK, EGSA…VSYI, TDTQDLTGIEWAPNGCVLAAWDTCLEYKVLLYSLD, and EWSLGIKSVAWSPSSQFLAIGSYDGKVRLLNHVTWKMITE. S281 carries the phosphoserine modification. WD repeat units follow at residues 328-369 and 371-410; these read NPRM…LFVV and EHMSPVRSFQWDPQQPRLAICTGGSKVYLWSPAGCVSVQV.

As to quaternary structure, interacts with SSX2IP. Ubiquitous.

It localises to the cytoplasm. The protein localises to the cytoskeleton. It is found in the microtubule organizing center. The protein resides in the centrosome. Functionally, the SSX2IP:WRAP73 complex is proposed to act as regulator of spindle anchoring at the mitotic centrosome. Required for the centrosomal localization of SSX2IP and normal mitotic bipolar spindle morphology. Required for the targeting of centriole satellite proteins to centrosomes such as of PCM1, SSX2IP, CEP290 and PIBF1/CEP90. Required for ciliogenesis and involved in the removal of the CEP97:CCP110 complex from the mother centriole. Involved in ciliary vesicle formation at the mother centriole and required for the docking of vesicles to the basal body during ciliogenesis; may promote docking of RAB8A- and ARL13B-containing vesicles. The polypeptide is WD repeat-containing protein WRAP73 (Wrap73) (Mus musculus (Mouse)).